Consider the following 439-residue polypeptide: Beta-1,3-galactosyl-O-glycosyl-glycoprotein beta-1,6-N-acetylglucosaminyltransferase (439 aa).

Residues 1–11 (MVGWKKKKLCR) are Cytoplasmic-facing. A helical; Signal-anchor for type II membrane protein membrane pass occupies residues 12–29 (GHHLWVLGCYMLLAVVSL). The Lumenal portion of the chain corresponds to 30-439 (RLSLRFKCDV…RHKAIYGTEL (410 aa)). 2 N-linked (GlcNAc...) asparagine; by host glycosylation sites follow: Asn-71 and Asn-107. 4 disulfides stabilise this stretch: Cys-72-Cys-229, Cys-163-Cys-383, Cys-184-Cys-211, and Cys-392-Cys-424.

The protein belongs to the glycosyltransferase 14 family.

It is found in the host Golgi apparatus membrane. The catalysed reaction is a 3-O-[beta-D-galactosyl-(1-&gt;3)-N-acetyl-alpha-D-galactosaminyl]-L-seryl-[protein] + UDP-N-acetyl-alpha-D-glucosamine = 3-O-{beta-D-galactosyl-(1-&gt;3)-[N-acetyl-beta-D-glucosaminyl-(1-&gt;6)]-N-acetyl-alpha-D-galactosaminyl}-L-seryl-[protein] + UDP + H(+). It catalyses the reaction a 3-O-[beta-D-galactosyl-(1-&gt;3)-N-acetyl-alpha-D-galactosaminyl]-L-threonyl-[protein] + UDP-N-acetyl-alpha-D-glucosamine = a 3-O-{beta-D-galactosyl-(1-&gt;3)-[N-acetyl-beta-D-glucosaminyl-(1-&gt;6)]-N-acetyl-alpha-D-galactosaminyl}-L-threonyl-[protein] + UDP + H(+). It carries out the reaction a beta-D-Gal-(1-&gt;4)-beta-D-GlcNAc-(1-&gt;3)-beta-D-Gal-(1-&gt;4)-beta-D-GlcNAc derivative + UDP-N-acetyl-alpha-D-glucosamine = a beta-D-Gal-(1-&gt;4)-beta-D-GlcNAc-(1-&gt;3)-[beta-D-GlcNAc-(1-&gt;6)]-beta-D-Gal-(1-&gt;4)-N-acetyl-beta-D-glucosaminyl derivative + UDP + H(+). The enzyme catalyses 3-O-[N-acetyl-beta-D-glucosaminyl-(1-&gt;3)-N-acetyl-alpha-D-galactosaminyl]-L-seryl-[protein] + UDP-N-acetyl-alpha-D-glucosamine = 3-O-[N-acetyl-beta-D-glucosaminyl-(1-&gt;3)-[N-acetyl-beta-D-glucosaminyl-(1-&gt;6)]-N-acetyl-alpha-D-galactosaminyl]-L-seryl-[protein] + UDP + H(+). The catalysed reaction is a 3-O-[N-acetyl-beta-D-glucosaminyl-(1-&gt;3)-N-acetyl-alpha-D-galactosaminyl]-L-threonyl-[protein] + UDP-N-acetyl-alpha-D-glucosamine = 3-O-[N-acetyl-beta-D-glucosaminyl-(1-&gt;3)-[N-acetyl-beta-D-glucosaminyl-(1-&gt;6)]-N-acetyl-alpha-D-galactosaminyl]-L-threonyl-[protein] + UDP + H(+). The protein operates within protein modification; protein glycosylation. In terms of biological role, non-essential glycosyltransferase that can synthesize all known mucin beta 6 N-acetylglucosaminides. Mediates core 2 and core 4 O-glycan branching, 2 important steps in mucin-type biosynthesis. Has also I-branching enzyme activity by converting linear into branched poly-N-acetyllactosaminoglycans. Contributes to the post-translational modifications of structural proteins. The protein is Beta-1,3-galactosyl-O-glycosyl-glycoprotein beta-1,6-N-acetylglucosaminyltransferase (Bo17) of Bovine herpesvirus 4 (BoHV-4).